A 465-amino-acid chain; its full sequence is Kynureninase (465 aa).

Residues Leu-116, Thr-117, 144–147, Asp-231, His-234, and Tyr-256 each bind pyridoxal 5'-phosphate; that span reads FPSD. The residue at position 257 (Lys-257) is an N6-(pyridoxal phosphate)lysine. Pyridoxal 5'-phosphate contacts are provided by Trp-291 and Asn-319.

Belongs to the kynureninase family. Homodimer. Pyridoxal 5'-phosphate is required as a cofactor.

It is found in the cytoplasm. It carries out the reaction L-kynurenine + H2O = anthranilate + L-alanine + H(+). The catalysed reaction is 3-hydroxy-L-kynurenine + H2O = 3-hydroxyanthranilate + L-alanine + H(+). It participates in amino-acid degradation; L-kynurenine degradation; L-alanine and anthranilate from L-kynurenine: step 1/1. The protein operates within cofactor biosynthesis; NAD(+) biosynthesis; quinolinate from L-kynurenine: step 2/3. Functionally, catalyzes the cleavage of L-kynurenine (L-Kyn) and L-3-hydroxykynurenine (L-3OHKyn) into anthranilic acid (AA) and 3-hydroxyanthranilic acid (3-OHAA), respectively. The protein is Kynureninase of Scheffersomyces stipitis (strain ATCC 58785 / CBS 6054 / NBRC 10063 / NRRL Y-11545) (Yeast).